The primary structure comprises 801 residues: Na(+)/H(+) antiporter subunit A1 (801 aa).

21 consecutive transmembrane segments (helical) span residues 4–25 (LHIA…YRFF), 30–49 (LGWF…LTLI), 79–101 (LGLL…SIGY), 108–127 (LGNF…GVVL), 131–153 (VIIL…SFWR), 166–188 (LIIT…IPTQ), 208–230 (FIFA…PFYI), 243–265 (SAYL…MTPI), 270–289 (QGWI…WASL), 302–324 (AFST…ISYH), 339–361 (AAIF…TGAV), 373–395 (LGGL…LSMA), 429–451 (YLFP…KFIM), 472–494 (ILML…FPGI), 526–548 (AFLS…SYWV), 589–611 (NNLV…SVPF), 621–641 (IRIF…LILF), 646–668 (LFSI…FFKA), 672–694 (ALTQ…YHLP), 707–729 (LTNA…IAYG), and 767–784 (LFES…YTMI).

The protein belongs to the CPA3 antiporters (TC 2.A.63) subunit A family. May form a heterooligomeric complex that consists of seven subunits: mnhA1, mnhB1, mnhC1, mnhD1, mnhE1, mnhF1 and mnhG1.

Its subcellular location is the cell membrane. Its activity is regulated as follows. Na(+) extrusion is completely inhibited by the H(+) conductor carbonyl cyanide m-chlorophenylhydrazone (CCCP). In terms of biological role, mnh complex is a Na(+)/H(+) antiporter involved in Na(+) excretion. The protein is Na(+)/H(+) antiporter subunit A1 (mnhA1) of Staphylococcus aureus (strain MRSA252).